We begin with the raw amino-acid sequence, 71 residues long: Exodeoxyribonuclease 7 small subunit (71 aa).

This sequence belongs to the XseB family. In terms of assembly, heterooligomer composed of large and small subunits.

It is found in the cytoplasm. It catalyses the reaction Exonucleolytic cleavage in either 5'- to 3'- or 3'- to 5'-direction to yield nucleoside 5'-phosphates.. Bidirectionally degrades single-stranded DNA into large acid-insoluble oligonucleotides, which are then degraded further into small acid-soluble oligonucleotides. This is Exodeoxyribonuclease 7 small subunit from Endomicrobium trichonymphae.